The following is a 1373-amino-acid chain: Insulin-like growth factor 1 receptor (1373 aa).

The first 30 residues, 1–30 (MKSGSGGGSPTSLWGLVFLSAALSLWPTSG), serve as a signal peptide directing secretion. An intrachain disulfide couples cysteine 33 to cysteine 52. Asparagine 51, asparagine 102, and asparagine 135 each carry an N-linked (GlcNAc...) asparagine glycan. Disulfide bonds link cysteine 150/cysteine 178, cysteine 182/cysteine 205, cysteine 192/cysteine 211, cysteine 215/cysteine 224, cysteine 219/cysteine 230, cysteine 231/cysteine 239, cysteine 235/cysteine 248, cysteine 251/cysteine 260, cysteine 264/cysteine 276, cysteine 282/cysteine 303, cysteine 307/cysteine 321, cysteine 324/cysteine 328, and cysteine 332/cysteine 354. The N-linked (GlcNAc...) asparagine glycan is linked to asparagine 245. N-linked (GlcNAc...) asparagine glycosylation is present at asparagine 314. N-linked (GlcNAc...) asparagine glycans are attached at residues asparagine 418 and asparagine 439. A disulfide bond links cysteine 456 and cysteine 489. Fibronectin type-III domains follow at residues 490 to 610 (ESDV…TNAS), 611 to 709 (VPSI…TEAE), 735 to 829 (RPER…TMPA), and 835 to 928 (IPGP…VPAK). N-linked (GlcNAc...) asparagine glycosylation is found at asparagine 535, asparagine 608, asparagine 623, asparagine 641, asparagine 748, asparagine 757, asparagine 765, asparagine 901, and asparagine 914. Over 742–936 (DVMQVANTTM…AKTTYENFMH (195 aa)) the chain is Extracellular. Residues 937–960 (LIIALPVAILLIVGGLVIMLYVFH) traverse the membrane as a helical segment. Residues 961–1373 (RKRNNSRLGN…ALPLPQSSTC (413 aa)) lie on the Cytoplasmic side of the membrane. The IRS1- and SHC1-binding motif lies at 978-981 (NPEY). Tyrosine 981 is subject to Phosphotyrosine. One can recognise a Protein kinase domain in the interval 1000–1276 (ITMNRELGQG…SIKDEMEPSF (277 aa)). ATP-binding positions include 1006–1014 (LGQGSFGMV) and lysine 1034. Residue aspartate 1137 is the Proton acceptor of the active site. A phosphotyrosine; by autocatalysis mark is found at tyrosine 1163, tyrosine 1167, and tyrosine 1168. Residues lysine 1170 and lysine 1173 each participate in a glycyl lysine isopeptide (Lys-Gly) (interchain with G-Cter in ubiquitin) cross-link. A Phosphoserine; by GSK3-beta modification is found at serine 1280. Residues 1283-1373 (YSEENKPPEP…ALPLPQSSTC (91 aa)) form a disordered region. Serine 1284 carries the post-translational modification Phosphoserine. The segment covering 1292 to 1305 (PEELEMELEMEPEN) has biased composition (acidic residues). Low complexity predominate over residues 1306-1322 (MESVPLDPSASSASLPL). Over residues 1323-1332 (PERHSGHKAE) the composition is skewed to basic and acidic residues.

This sequence belongs to the protein kinase superfamily. Tyr protein kinase family. Insulin receptor subfamily. Tetramer of 2 alpha and 2 beta chains linked by disulfide bonds. The alpha chains contribute to the formation of the ligand-binding domain, while the beta chain carries the kinase domain. Interacts with PIK3R1 and with the PTB/PID domains of IRS1 and SHC1 in vitro when autophosphorylated on tyrosine residues. Forms a hybrid receptor with INSR, the hybrid is a tetramer consisting of 1 alpha chain and 1 beta chain of INSR and 1 alpha chain and 1 beta chain of IGF1R. Interacts with ARRB1 and ARRB2. Interacts with GRB10. Interacts with RACK1. Interacts with SOCS1, SOCS2 and SOCS3. Interacts with 14-3-3 proteins. Interacts with NMD2. Interacts with MAP3K5. Interacts with STAT3. Found in a ternary complex with IGF1 and ITGAV:ITGB3 or ITGA6:ITGB4. Interacts (nascent precursor form) with ZFAND2B. Autophosphorylated on tyrosine residues in response to ligand binding. Autophosphorylation occurs in trans, i.e. one subunit of the dimeric receptor phosphorylates tyrosine residues on the other subunit. Autophosphorylation occurs in a sequential manner; Tyr-1167 is predominantly phosphorylated first, followed by phosphorylation of Tyr-1163 and Tyr-1168. While every single phosphorylation increases kinase activity, all three tyrosine residues in the kinase activation loop (Tyr-1163, Tyr-1167 and Tyr-1168) have to be phosphorylated for optimal activity. Can be autophosphorylated at additional tyrosine residues (in vitro). Autophosphorylated is followed by phosphorylation of juxtamembrane tyrosines and C-terminal serines. May also be phosphorylated at Tyr-1163 and Tyr-1168 by mTORC2. Phosphorylation of Tyr-981 is required for IRS1- and SHC1-binding. Phosphorylation of Ser-1280 by GSK-3beta restrains kinase activity and promotes cell surface expression, it requires a priming phosphorylation at Ser-1284. Dephosphorylated by PTPN1. In terms of processing, polyubiquitinated at Lys-1170 and Lys-1173 through both 'Lys-48' and 'Lys-29' linkages, promoting receptor endocytosis and subsequent degradation by the proteasome. Ubiquitination is facilitated by pre-existing phosphorylation. Post-translationally, sumoylated with SUMO1. Controlled by regulated intramembrane proteolysis (RIP). Undergoes metalloprotease-dependent constitutive ectodomain shedding to produce a membrane-anchored 52 kDa C-Terminal fragment which is further processed by presenilin gamma-secretase to yield an intracellular 50 kDa fragment.

It localises to the cell membrane. It carries out the reaction L-tyrosyl-[protein] + ATP = O-phospho-L-tyrosyl-[protein] + ADP + H(+). Activated by autophosphorylation at Tyr-1163, Tyr-1167 and Tyr-1168 on the kinase activation loop; phosphorylation at all three tyrosine residues is required for optimal kinase activity. Inhibited by MSC1609119A-1, BMS-754807, PQIP, benzimidazole pyridinone, isoquinolinedione, bis-azaindole, 3-cyanoquinoline, 2,4-bis-arylamino-1,3-pyrimidine, pyrrolopyrimidine, pyrrole-5-carboxaldehyde, picropodophyllin (PPP), tyrphostin derivatives. While most inhibitors bind to the ATP binding pocket, MSC1609119A-1 functions as allosteric inhibitor and binds close to the DFG motif and the activation loop. Receptor tyrosine kinase which mediates actions of insulin-like growth factor 1 (IGF1). Binds IGF1 with high affinity and IGF2 and insulin (INS) with a lower affinity. The activated IGF1R is involved in cell growth and survival control. IGF1R is crucial for tumor transformation and survival of malignant cell. Ligand binding activates the receptor kinase, leading to receptor autophosphorylation, and tyrosines phosphorylation of multiple substrates, that function as signaling adapter proteins including, the insulin-receptor substrates (IRS1/2), Shc and 14-3-3 proteins. Phosphorylation of IRSs proteins lead to the activation of two main signaling pathways: the PI3K-AKT/PKB pathway and the Ras-MAPK pathway. The result of activating the MAPK pathway is increased cellular proliferation, whereas activating the PI3K pathway inhibits apoptosis and stimulates protein synthesis. Phosphorylated IRS1 can activate the 85 kDa regulatory subunit of PI3K (PIK3R1), leading to activation of several downstream substrates, including protein AKT/PKB. AKT phosphorylation, in turn, enhances protein synthesis through mTOR activation and triggers the antiapoptotic effects of IGFIR through phosphorylation and inactivation of BAD. In parallel to PI3K-driven signaling, recruitment of Grb2/SOS by phosphorylated IRS1 or Shc leads to recruitment of Ras and activation of the ras-MAPK pathway. In addition to these two main signaling pathways IGF1R signals also through the Janus kinase/signal transducer and activator of transcription pathway (JAK/STAT). Phosphorylation of JAK proteins can lead to phosphorylation/activation of signal transducers and activators of transcription (STAT) proteins. In particular activation of STAT3, may be essential for the transforming activity of IGF1R. The JAK/STAT pathway activates gene transcription and may be responsible for the transforming activity. JNK kinases can also be activated by the IGF1R. IGF1 exerts inhibiting activities on JNK activation via phosphorylation and inhibition of MAP3K5/ASK1, which is able to directly associate with the IGF1R. When present in a hybrid receptor with INSR, binds IGF1. The protein is Insulin-like growth factor 1 receptor (Igf1r) of Mus musculus (Mouse).